Reading from the N-terminus, the 270-residue chain is Diaminopimelate epimerase (270 aa).

Positions 15, 49, and 66 each coordinate substrate. The Proton donor role is filled by Cys75. Residues 76 to 77, Asn155, Asn187, and 204 to 205 each bind substrate; these read GN and ER. Cys213 serves as the catalytic Proton acceptor. 214 to 215 provides a ligand contact to substrate; sequence GS.

The protein belongs to the diaminopimelate epimerase family. Homodimer.

It is found in the cytoplasm. The enzyme catalyses (2S,6S)-2,6-diaminopimelate = meso-2,6-diaminopimelate. Its pathway is amino-acid biosynthesis; L-lysine biosynthesis via DAP pathway; DL-2,6-diaminopimelate from LL-2,6-diaminopimelate: step 1/1. Catalyzes the stereoinversion of LL-2,6-diaminopimelate (L,L-DAP) to meso-diaminopimelate (meso-DAP), a precursor of L-lysine and an essential component of the bacterial peptidoglycan. This Rickettsia conorii (strain ATCC VR-613 / Malish 7) protein is Diaminopimelate epimerase.